Consider the following 411-residue polypeptide: Probable protein S-acyltransferase 2 (411 aa).

2 helical membrane passes run 56-76 and 85-105; these read LTTA…VFLI and SLIL…LFLT. The 51-residue stretch at 160–210 folds into the DHHC domain; that stretch reads KFCDTCLLYRPPRASHCSICNNCVQRFDHHCPWVGQCIALRNYPYFICFIS. Catalysis depends on C190, which acts as the S-palmitoyl cysteine intermediate. The next 2 membrane-spanning stretches (helical) occupy residues 205-225 and 245-265; these read FICF…FSWV and FVVL…LTVF. Position 405 is a phosphoserine (S405).

The protein belongs to the DHHC palmitoyltransferase family. Expressed in flowers and pollen.

The protein resides in the cytoplasmic vesicle membrane. It carries out the reaction L-cysteinyl-[protein] + hexadecanoyl-CoA = S-hexadecanoyl-L-cysteinyl-[protein] + CoA. Its function is as follows. Palmitoyl acyltransferase. The chain is Probable protein S-acyltransferase 2 (PAT02) from Arabidopsis thaliana (Mouse-ear cress).